We begin with the raw amino-acid sequence, 140 residues long: Mitochondrial import receptor subunit TOM22 homolog (140 aa).

The span at 1–11 (MAAAAAGPGAP) shows a compositional bias: low complexity. The interval 1 to 40 (MAAAAAGPGAPLSADELLPKGDAEKPEEELEEEDDEELDE) is disordered. Residues 1 to 81 (MAAAAAGPGA…AQKMYRFSRA (81 aa)) are Cytoplasmic-facing. Ser-13 is modified (phosphoserine). Over residues 25-40 (KPEEELEEEDDEELDE) the composition is skewed to acidic residues. Residues 39 to 48 (DETLSERLWG) form an import sequence; necessary for mitochondrion outer membrane localization and integration in the TOM complex region. Position 41 is a phosphothreonine (Thr-41). Ser-43 is modified (phosphoserine). The tract at residues 81 to 101 (AALWIGTTSFMILVLPVVFET) is TMD; necessary for mitochondrion outer membrane localization and integration in the TOM complex. The helical transmembrane segment at 82 to 101 (ALWIGTTSFMILVLPVVFET) threads the bilayer. Over 102 to 140 (EKLQMEQQQQLQQRQILLGPNTGLSGGMPGALPSLPGKI) the chain is Mitochondrial intermembrane. Residues 121 to 140 (PNTGLSGGMPGALPSLPGKI) form a C-tail signal; necessary for mitochondrion outer membrane localization and integration in the TOM complex region.

It belongs to the Tom22 family. Forms part of the preprotein translocase complex of the outer mitochondrial membrane (TOM complex) which consists of at least 7 different proteins (TOMM5, TOMM6, TOMM7, TOMM20, TOMM22, TOMM40 and TOMM70). Interacts with PPP2R2B and TOMM40.

Its subcellular location is the mitochondrion outer membrane. In terms of biological role, central receptor component of the translocase of the outer membrane of mitochondria (TOM complex) responsible for the recognition and translocation of cytosolically synthesized mitochondrial preproteins. Together with the peripheral receptor TOM20 functions as the transit peptide receptor and facilitates the movement of preproteins into the translocation pore. Required for the translocation across the mitochondrial outer membrane of cytochrome P450 monooxygenases. The sequence is that of Mitochondrial import receptor subunit TOM22 homolog (TOMM22) from Bos taurus (Bovine).